A 136-amino-acid chain; its full sequence is MARTKQTARKSTGGKAPRKQLATKAARKSAPSTGGVKKPHRYRPGTVALREIRRYQKSTELLIRKLPFQRLVREIAQDFKTDLRFQSAAIGALQEASEAYLVGLFEDTNLCAIHAKRVTIMPKDIQLARRIRGERA.

The segment at 1–43 (MARTKQTARKSTGGKAPRKQLATKAARKSAPSTGGVKKPHRYR) is disordered. The residue at position 3 (arginine 3) is an Asymmetric dimethylarginine; by PRMT6. The residue at position 4 (threonine 4) is a Phosphothreonine; by HASPIN and VRK1. Residue lysine 5 is modified to Allysine; alternate. An N6,N6,N6-trimethyllysine; alternate modification is found at lysine 5. N6,N6-dimethyllysine; alternate is present on lysine 5. Lysine 5 is modified (N6-(2-hydroxyisobutyryl)lysine; alternate). The residue at position 5 (lysine 5) is an N6-acetyllysine; alternate. At lysine 5 the chain carries N6-methyllysine; alternate. Glutamine 6 carries the post-translational modification 5-glutamyl dopamine; alternate. Glutamine 6 bears the 5-glutamyl serotonin; alternate mark. Residue threonine 7 is modified to Phosphothreonine; by PKC. The residue at position 10 (lysine 10) is an N6-(2-hydroxyisobutyryl)lysine; alternate. Lysine 10 bears the N6-lactoyllysine; alternate mark. Position 10 is an N6-methylated lysine (lysine 10). Position 11 is an ADP-ribosylserine; alternate (serine 11). The residue at position 11 (serine 11) is a Phosphoserine; alternate; by AURKB, AURKC, RPS6KA3, RPS6KA4 and RPS6KA5. Threonine 12 bears the Phosphothreonine; by PKC mark. Lysine 15 bears the N6-(2-hydroxyisobutyryl)lysine; alternate mark. Lysine 15 carries the post-translational modification N6-lactoyllysine; alternate. Lysine 15 is modified (N6-acetyllysine). Lysine 15 is modified (N6-glutaryllysine; alternate). The residue at position 18 (arginine 18) is an Asymmetric dimethylarginine. Residues lysine 19, lysine 24, and lysine 28 each carry the N6-(2-hydroxyisobutyryl)lysine; alternate modification. Lysine 19 carries the N6-acetyllysine; alternate modification. N6-lactoyllysine; alternate is present on residues lysine 19, lysine 24, and lysine 28. An N6-glutaryllysine; alternate mark is found at lysine 19, lysine 24, and lysine 28. An N6-butyryllysine; alternate mark is found at lysine 19 and lysine 24. N6-methylated lysine; alternate is present on lysine 19. Position 24 is an N6-acetyllysine (lysine 24). Lysine 28 bears the N6-acetyllysine; alternate mark. An N6-methylated lysine; alternate modification is found at lysine 28. Serine 29 is subject to ADP-ribosylserine; alternate. A Phosphoserine; alternate; by AURKB, AURKC and RPS6KA5 modification is found at serine 29. At lysine 37 the chain carries N6-(2-hydroxyisobutyryl)lysine; alternate. Lysine 37 carries the post-translational modification N6-acetyllysine; alternate. Lysine 37 is subject to N6-methylated lysine; alternate. The residue at position 42 (tyrosine 42) is a Phosphotyrosine. The residue at position 57 (lysine 57) is an N6-(2-hydroxyisobutyryl)lysine; alternate. N6-lactoyllysine; alternate is present on lysine 57. Lysine 57 carries the N6-glutaryllysine; alternate modification. An N6-succinyllysine; alternate modification is found at lysine 57. The residue at position 58 (serine 58) is a Phosphoserine. 2 positions are modified to N6-(2-hydroxyisobutyryl)lysine; alternate: lysine 65 and lysine 80. Lysine 65 and lysine 80 each carry N6-methylated lysine. Position 80 is an N6-lactoyllysine; alternate (lysine 80). The residue at position 80 (lysine 80) is an N6-glutaryllysine; alternate. Lysine 80 carries the post-translational modification N6-succinyllysine; alternate. Threonine 81 is modified (phosphothreonine). 2 positions are modified to N6-acetyllysine; alternate: lysine 116 and lysine 123. An N6-glutaryllysine; alternate mark is found at lysine 116 and lysine 123. N6-(2-hydroxyisobutyryl)lysine; alternate is present on lysine 123. Position 123 is an N6-methyllysine; alternate (lysine 123). N6-succinyllysine; alternate is present on lysine 123.

The protein belongs to the histone H3 family. In terms of assembly, the nucleosome is a histone octamer containing two molecules each of H2A, H2B, H3 and H4 assembled in one H3-H4 heterotetramer and two H2A-H2B heterodimers. The octamer wraps approximately 147 bp of DNA. Interacts with zmynd11; when trimethylated at 'Lys-36' (H3.3K36me3). Acetylation is generally linked to gene activation. Acetylation on Lys-19 (H3K18ac) and Lys-24 (H3K24ac) favors methylation at Arg-18 (H3R17me). Acetylation at Lys-123 (H3K122ac) by EP300/p300 plays a central role in chromatin structure: localizes at the surface of the histone octamer and stimulates transcription, possibly by promoting nucleosome instability. In terms of processing, asymmetric dimethylation at Arg-18 (H3R17me2a) is linked to gene activation. Asymmetric dimethylation at Arg-3 (H3R2me2a) by prmt6 is linked to gene repression and is mutually exclusive with H3 Lys-5 methylation (H3K4me2 and H3K4me3). H3R2me2a is present at the 3' of genes regardless of their transcription state and is enriched on inactive promoters, while it is absent on active promoters. Post-translationally, specifically enriched in modifications associated with active chromatin such as methylation at Lys-5 (H3K4me), Lys-37 (H3K36me) and Lys-80 (H3K79me) are linked to gene activation. Methylation at Lys-5 (H3K4me) facilitates subsequent acetylation of H3 and H4. Methylation at Lys-80 (H3K79me) is associated with DNA double-strand break (DSB) responses and is a specific target for tp53bp1. Methylation at Lys-10 (H3K9me) and Lys-28 (H3K27me) are linked to gene repression. Methylation at Lys-10 (H3K9me) is a specific target for HP1 proteins (cbx1, cbx3 and cbx5) and prevents subsequent phosphorylation at Ser-11 (H3S10ph) and acetylation of H3 and H4. Methylation at Lys-5 (H3K4me) and Lys-80 (H3K79me) require preliminary monoubiquitination of H2B at 'Lys-120'. Phosphorylated at Thr-4 (H3T3ph) by VRK1. Phosphorylated at Thr-4 (H3T3ph) by HASPIN during prophase and dephosphorylated during anaphase. Phosphorylation at Ser-11 (H3S10ph) by aurkb is crucial for chromosome condensation and cell-cycle progression during mitosis and meiosis. In addition phosphorylation at Ser-11 (H3S10ph) by RPS6KA4 and RPS6KA5 is important during interphase because it enables the transcription of genes following external stimulation, like mitogens, stress, growth factors or UV irradiation and result in the activation of genes, such as c-fos and c-jun. Phosphorylation at Ser-11 (H3S10ph), which is linked to gene activation, prevents methylation at Lys-10 (H3K9me) but facilitates acetylation of H3 and H4. Phosphorylation at Ser-11 (H3S10ph) by aurkb mediates the dissociation of HP1 proteins (cbx1, cbx3 and cbx5) from heterochromatin. Phosphorylation at Ser-11 (H3S10ph) is also an essential regulatory mechanism for neoplastic cell transformation. Phosphorylated at Ser-29 (H3S28ph) by map3k20 isoform 1, rps6ka5 or aurkb during mitosis or upon ultraviolet B irradiation. Phosphorylation at Thr-7 (H3T6ph) by prkcb is a specific tag for epigenetic transcriptional activation that prevents demethylation of Lys-5 (H3K4me) by lsd1/kdm1a. At centromeres, specifically phosphorylated at Thr-12 (H3T11ph) from prophase to early anaphase, by DAPK3 and PKN1. Phosphorylation at Thr-12 (H3T11ph) by PKN1 or isoform M2 of PKM (PKM2) is a specific tag for epigenetic transcriptional activation that promotes demethylation of Lys-10 (H3K9me) by kdm4c/jmjd2c. Phosphorylation at Tyr-42 (H3Y41ph) by jak2 promotes exclusion of cbx5 (HP1 alpha) from chromatin. Phosphorylation on Ser-32 (H3S31ph) is specific to regions bordering centromeres in metaphase chromosomes. In terms of processing, monoubiquitinated by rag1 in lymphoid cells, monoubiquitination is required for V(D)J recombination. Post-translationally, lysine deamination at Lys-5 (H3K4all) to form allysine only takes place on H3K4me3 and results in gene repression. Butyrylation of histones marks active promoters and competes with histone acetylation. It is present during late spermatogenesis. In terms of processing, succinylation at Lys-80 (H3K79succ) by KAT2A takes place with a maximum frequency around the transcription start sites of genes. It gives a specific tag for epigenetic transcription activation. Desuccinylation at Lys-123 (H3K122succ) by SIRT7 in response to DNA damage promotes chromatin condensation and double-strand breaks (DSBs) repair. Post-translationally, serine ADP-ribosylation constitutes the primary form of ADP-ribosylation of proteins in response to DNA damage. Serine ADP-ribosylation at Ser-11 (H3S10ADPr) is mutually exclusive with phosphorylation at Ser-11 (H3S10ph) and impairs acetylation at Lys-10 (H3K9ac). Serotonylated by TGM2 at Gln-6 (H3Q5ser) during serotonergic neuron differentiation. H3Q5ser is associated with trimethylation of Lys-5 (H3K4me3) and enhances general transcription factor IID (TFIID) complex-binding to H3K4me3, thereby facilitating transcription. In terms of processing, dopaminylated by TGM2 at Gln-6 (H3Q5dop) in ventral tegmental area (VTA) neurons. H3Q5dop mediates neurotransmission-independent role of nuclear dopamine by regulating relapse-related transcriptional plasticity in the reward system. Post-translationally, lactylated in macrophages by EP300/P300 by using lactoyl-CoA directly derived from endogenous or exogenous lactate, leading to stimulates gene transcription.

The protein resides in the nucleus. The protein localises to the chromosome. In terms of biological role, variant histone H3 which replaces conventional H3 in a wide range of nucleosomes in active genes. Constitutes the predominant form of histone H3 in non-dividing cells and is incorporated into chromatin independently of DNA synthesis. Deposited at sites of nucleosomal displacement throughout transcribed genes, suggesting that it represents an epigenetic imprint of transcriptionally active chromatin. Nucleosomes wrap and compact DNA into chromatin, limiting DNA accessibility to the cellular machineries which require DNA as a template. Histones thereby play a central role in transcription regulation, DNA repair, DNA replication and chromosomal stability. DNA accessibility is regulated via a complex set of post-translational modifications of histones, also called histone code, and nucleosome remodeling. The chain is Histone H3.3 (h3f3a) from Danio rerio (Zebrafish).